Reading from the N-terminus, the 80-residue chain is EMBRYO SURROUNDING FACTOR 1-like protein 1 (80 aa).

The signal sequence occupies residues 1-22 (MKSSHIALLCIVVLSLFALHEC). 4 disulfides stabilise this stretch: C38/C52, C43/C78, C50/C74, and C53/C64.

It belongs to the MEG family. As to expression, expressed in leaves.

In Arabidopsis thaliana (Mouse-ear cress), this protein is EMBRYO SURROUNDING FACTOR 1-like protein 1 (ESFL1).